A 180-amino-acid polypeptide reads, in one-letter code: ATP synthase subunit b, chloroplastic (180 aa).

A helical transmembrane segment spans residues Val-28–Phe-48.

This sequence belongs to the ATPase B chain family. F-type ATPases have 2 components, F(1) - the catalytic core - and F(0) - the membrane proton channel. F(1) has five subunits: alpha(3), beta(3), gamma(1), delta(1), epsilon(1). F(0) has four main subunits: a(1), b(1), b'(1) and c(10-14). The alpha and beta chains form an alternating ring which encloses part of the gamma chain. F(1) is attached to F(0) by a central stalk formed by the gamma and epsilon chains, while a peripheral stalk is formed by the delta, b and b' chains.

Its subcellular location is the plastid. The protein resides in the chloroplast thylakoid membrane. F(1)F(0) ATP synthase produces ATP from ADP in the presence of a proton or sodium gradient. F-type ATPases consist of two structural domains, F(1) containing the extramembraneous catalytic core and F(0) containing the membrane proton channel, linked together by a central stalk and a peripheral stalk. During catalysis, ATP synthesis in the catalytic domain of F(1) is coupled via a rotary mechanism of the central stalk subunits to proton translocation. Functionally, component of the F(0) channel, it forms part of the peripheral stalk, linking F(1) to F(0). The sequence is that of ATP synthase subunit b, chloroplastic from Cuscuta obtusiflora (Peruvian dodder).